We begin with the raw amino-acid sequence, 800 residues long: Endonuclease MutS2 (800 aa).

An ATP-binding site is contributed by 336–343 (GPNTGGKT). A Smr domain is found at 725–800 (LDLRGVRYEA…GDGATIVELK (76 aa)).

It belongs to the DNA mismatch repair MutS family. MutS2 subfamily. As to quaternary structure, homodimer. Binds to stalled ribosomes, contacting rRNA.

Functionally, endonuclease that is involved in the suppression of homologous recombination and thus may have a key role in the control of bacterial genetic diversity. In terms of biological role, acts as a ribosome collision sensor, splitting the ribosome into its 2 subunits. Detects stalled/collided 70S ribosomes which it binds and splits by an ATP-hydrolysis driven conformational change. Acts upstream of the ribosome quality control system (RQC), a ribosome-associated complex that mediates the extraction of incompletely synthesized nascent chains from stalled ribosomes and their subsequent degradation. Probably generates substrates for RQC. In Leuconostoc mesenteroides subsp. mesenteroides (strain ATCC 8293 / DSM 20343 / BCRC 11652 / CCM 1803 / JCM 6124 / NCDO 523 / NBRC 100496 / NCIMB 8023 / NCTC 12954 / NRRL B-1118 / 37Y), this protein is Endonuclease MutS2.